The chain runs to 205 residues: Adenylate kinase (205 aa).

Residue 11 to 16 (GSGKGT) participates in ATP binding. The NMP stretch occupies residues 31-60 (STGDIFRHNVKSMTPLGVEAKRYIDNGDFV). Residues Thr32, Arg37, 58–60 (DFV), 86–89 (GYPR), and Gln93 contribute to the AMP site. The interval 127 to 137 (KRAEIEGRADD) is LID. Arg128 lines the ATP pocket. 2 residues coordinate AMP: Arg134 and Arg145. Gly173 contributes to the ATP binding site.

Belongs to the adenylate kinase family. In terms of assembly, monomer.

The protein resides in the cytoplasm. It carries out the reaction AMP + ATP = 2 ADP. Its pathway is purine metabolism; AMP biosynthesis via salvage pathway; AMP from ADP: step 1/1. Catalyzes the reversible transfer of the terminal phosphate group between ATP and AMP. Plays an important role in cellular energy homeostasis and in adenine nucleotide metabolism. The chain is Adenylate kinase from Micrococcus luteus (strain ATCC 4698 / DSM 20030 / JCM 1464 / CCM 169 / CCUG 5858 / IAM 1056 / NBRC 3333 / NCIMB 9278 / NCTC 2665 / VKM Ac-2230) (Micrococcus lysodeikticus).